Here is a 535-residue protein sequence, read N- to C-terminus: CTP synthase (535 aa).

The amidoligase domain stretch occupies residues Met-1–Leu-266. Residue Ser-12 participates in CTP binding. Ser-12 is a UTP binding site. ATP contacts are provided by residues Gly-13–Ile-18 and Asp-70. Positions 70 and 140 each coordinate Mg(2+). Residues Asp-147 to Glu-149, Lys-187 to Gln-192, and Lys-223 contribute to the CTP site. UTP is bound by residues Lys-187 to Gln-192 and Lys-223. In terms of domain architecture, Glutamine amidotransferase type-1 spans Arg-291–Asp-535. Residue Gly-355 coordinates L-glutamine. Cys-382 acts as the Nucleophile; for glutamine hydrolysis in catalysis. Residues Leu-383 to Gln-386, Glu-406, and Arg-464 contribute to the L-glutamine site. Active-site residues include His-508 and Glu-510.

Belongs to the CTP synthase family. As to quaternary structure, homotetramer.

The catalysed reaction is UTP + L-glutamine + ATP + H2O = CTP + L-glutamate + ADP + phosphate + 2 H(+). It carries out the reaction L-glutamine + H2O = L-glutamate + NH4(+). The enzyme catalyses UTP + NH4(+) + ATP = CTP + ADP + phosphate + 2 H(+). It participates in pyrimidine metabolism; CTP biosynthesis via de novo pathway; CTP from UDP: step 2/2. Its activity is regulated as follows. Allosterically activated by GTP, when glutamine is the substrate; GTP has no effect on the reaction when ammonia is the substrate. The allosteric effector GTP functions by stabilizing the protein conformation that binds the tetrahedral intermediate(s) formed during glutamine hydrolysis. Inhibited by the product CTP, via allosteric rather than competitive inhibition. Its function is as follows. Catalyzes the ATP-dependent amination of UTP to CTP with either L-glutamine or ammonia as the source of nitrogen. Regulates intracellular CTP levels through interactions with the four ribonucleotide triphosphates. The protein is CTP synthase of Methanopyrus kandleri (strain AV19 / DSM 6324 / JCM 9639 / NBRC 100938).